The sequence spans 348 residues: Tocopherol O-methyltransferase, chloroplastic (348 aa).

A chloroplast-targeting transit peptide spans 1 to 51 (MKATLAAPSSLTSLPYRTNSSFGSKSSLLFRSPSSSSSVSMTTTRGNVAVA). Residue A52 is modified to N-acetylalanine. An SAM motif I region spans residues 130 to 139 (VVDVGCGIGG). Residues 193–201 (GKFDLVWSM) are SAM motif II. The interval 220 to 229 (VAAPGGRIII) is SAM motif III.

Belongs to the class I-like SAM-binding methyltransferase superfamily. gTMT family.

It localises to the plastid. The protein localises to the chloroplast. The enzyme catalyses gamma-tocopherol + S-adenosyl-L-methionine = (+)-alpha-tocopherol + S-adenosyl-L-homocysteine + H(+). It carries out the reaction delta-tocotrienol + S-adenosyl-L-methionine = beta-tocotrienol + S-adenosyl-L-homocysteine + H(+). It catalyses the reaction gamma-tocotrienol + S-adenosyl-L-methionine = alpha-tocotrienol + S-adenosyl-L-homocysteine + H(+). The catalysed reaction is delta-tocopherol + S-adenosyl-L-methionine = beta-tocopherol + S-adenosyl-L-homocysteine + H(+). It functions in the pathway cofactor biosynthesis; tocopherol biosynthesis. Its function is as follows. Involved in the synthesis of tocopherol (vitamin E). Methylates gamma- and delta-tocopherol to form beta- and alpha-tocopherol, respectively. This chain is Tocopherol O-methyltransferase, chloroplastic (VTE4), found in Arabidopsis thaliana (Mouse-ear cress).